A 476-amino-acid polypeptide reads, in one-letter code: Glucan endo-1,3-beta-glucosidase 9 (476 aa).

A signal peptide spans 1-25 (MARRLFLLLLAVTAGLSLTGTTVRA). N-linked (GlcNAc...) asparagine glycosylation is found at N88 and N101. Catalysis depends on E122, which acts as the Proton donor. N-linked (GlcNAc...) asparagine glycosylation is found at N184, N216, N277, N320, N342, N374, and N405. C364 and C424 are joined by a disulfide. S453 is lipidated: GPI-anchor amidated serine. Residues 454–476 (SSQTPNFFQSWPLLLLFLLSGLF) constitute a propeptide, removed in mature form.

The protein belongs to the glycosyl hydrolase 17 family. In terms of processing, contains two additional disulfide bonds.

Its subcellular location is the secreted. The protein resides in the cell wall. It localises to the cell membrane. The catalysed reaction is Hydrolysis of (1-&gt;3)-beta-D-glucosidic linkages in (1-&gt;3)-beta-D-glucans.. This Arabidopsis thaliana (Mouse-ear cress) protein is Glucan endo-1,3-beta-glucosidase 9.